Here is a 172-residue protein sequence, read N- to C-terminus: Shikimate kinase (172 aa).

Gly12–Ser17 is an ATP binding site. Thr16 serves as a coordination point for Mg(2+). Residues Asp34, Arg58, and Gly81 each contribute to the substrate site. An ATP-binding site is contributed by Arg122. Position 139 (Arg139) interacts with substrate.

This sequence belongs to the shikimate kinase family. In terms of assembly, monomer. The cofactor is Mg(2+).

Its subcellular location is the cytoplasm. The catalysed reaction is shikimate + ATP = 3-phosphoshikimate + ADP + H(+). The protein operates within metabolic intermediate biosynthesis; chorismate biosynthesis; chorismate from D-erythrose 4-phosphate and phosphoenolpyruvate: step 5/7. Its function is as follows. Catalyzes the specific phosphorylation of the 3-hydroxyl group of shikimic acid using ATP as a cosubstrate. This is Shikimate kinase from Dictyoglomus turgidum (strain DSM 6724 / Z-1310).